The sequence spans 257 residues: Nickel import system ATP-binding protein NikD (257 aa).

The ABC transporter domain maps to 4 to 245; sequence IDIQNLTIKN…HLHPYTERLI (242 aa). An ATP-binding site is contributed by 37 to 44; the sequence is GESGAGKS.

It belongs to the ABC transporter superfamily. In terms of assembly, the complex is composed of two ATP-binding proteins (NikD and NikE), two transmembrane proteins (NikB and NikC) and a solute-binding protein (NikA).

It is found in the cell membrane. The catalysed reaction is Ni(2+)(out) + ATP + H2O = Ni(2+)(in) + ADP + phosphate + H(+). In terms of biological role, part of the ABC transporter complex NikABCDE (Opp2) involved in nickel import. Probably responsible for energy coupling to the transport system. This Staphylococcus aureus (strain MSSA476) protein is Nickel import system ATP-binding protein NikD.